A 493-amino-acid polypeptide reads, in one-letter code: ATP synthase subunit beta (493 aa).

Residue 169–176 (GGAGVGKT) participates in ATP binding.

It belongs to the ATPase alpha/beta chains family. In terms of assembly, F-type ATPases have 2 components, CF(1) - the catalytic core - and CF(0) - the membrane proton channel. CF(1) has five subunits: alpha(3), beta(3), gamma(1), delta(1), epsilon(1). CF(0) has three main subunits: a(1), b(2) and c(9-12). The alpha and beta chains form an alternating ring which encloses part of the gamma chain. CF(1) is attached to CF(0) by a central stalk formed by the gamma and epsilon chains, while a peripheral stalk is formed by the delta and b chains.

Its subcellular location is the cell inner membrane. The catalysed reaction is ATP + H2O + 4 H(+)(in) = ADP + phosphate + 5 H(+)(out). Functionally, produces ATP from ADP in the presence of a proton gradient across the membrane. The catalytic sites are hosted primarily by the beta subunits. This Gluconacetobacter diazotrophicus (strain ATCC 49037 / DSM 5601 / CCUG 37298 / CIP 103539 / LMG 7603 / PAl5) protein is ATP synthase subunit beta.